The primary structure comprises 465 residues: tRNA (guanine(37)-N(1))-methyltransferase (465 aa).

The transit peptide at 1-20 directs the protein to the mitochondrion; the sequence is MDKNSQLRDMNLFRAPAARA. Residues histidine 238 and 304 to 305 contribute to the S-adenosyl-L-methionine site; that span reads DG. Residues 326–345 form a disordered region; that stretch reads AVIKPPRPPRKSAAPPPEPV. Asparagine 359 provides a ligand contact to S-adenosyl-L-methionine.

The protein belongs to the class I-like SAM-binding methyltransferase superfamily. TRM5/TYW2 family. Monomer.

It localises to the mitochondrion matrix. The protein localises to the nucleus. Its subcellular location is the cytoplasm. The catalysed reaction is guanosine(37) in tRNA + S-adenosyl-L-methionine = N(1)-methylguanosine(37) in tRNA + S-adenosyl-L-homocysteine + H(+). In terms of biological role, specifically methylates the N1 position of guanosine-37 in various cytoplasmic and mitochondrial tRNAs. Methylation is not dependent on the nature of the nucleoside 5' of the target nucleoside. This is the first step in the biosynthesis of wybutosine (yW), a modified base adjacent to the anticodon of tRNAs and required for accurate decoding. The polypeptide is tRNA (guanine(37)-N(1))-methyltransferase (Fusarium vanettenii (strain ATCC MYA-4622 / CBS 123669 / FGSC 9596 / NRRL 45880 / 77-13-4) (Fusarium solani subsp. pisi)).